The primary structure comprises 1167 residues: Chromosome partition protein Smc (1167 aa).

32 to 39 (PNGCGKSN) contributes to the ATP binding site. Coiled coils occupy residues 170–274 (ISKY…RIET), 310–390 (QREL…HNRD), 468–500 (GLQEQQRASQGELAEVRKQAQAARGRLSSLETL), 653–870 (ALLR…ERAL), and 982–1011 (EYLDAQNLDLNTALETLEEAIRKIDRETRG).

The protein belongs to the SMC family. As to quaternary structure, homodimer.

The protein localises to the cytoplasm. Required for chromosome condensation and partitioning. The chain is Chromosome partition protein Smc from Xanthomonas oryzae pv. oryzae (strain KACC10331 / KXO85).